The primary structure comprises 394 residues: Flap endonuclease 1-A (394 aa).

The segment at 1-105 (MGIKGLTGLL…GVLSKRLERR (105 aa)) is N-domain. Asp34 contacts Mg(2+). Arg47 and Arg71 together coordinate DNA. Mg(2+) is bound by residues Asp87, Glu159, Glu161, Asp180, and Asp182. The segment at 123 to 254 (DVDRFSRRTV…KSALKLIREY (132 aa)) is I-domain. A DNA-binding site is contributed by Glu159. 2 residues coordinate DNA: Gly232 and Asp234. Residue Asp234 coordinates Mg(2+). Residues 341-349 (QQGRLDGFF) form an interaction with PCNA region. The disordered stretch occupies residues 356-375 (KAAAPAPVGKAKGKGKVDAK).

It belongs to the XPG/RAD2 endonuclease family. FEN1 subfamily. In terms of assembly, interacts with PCNA. Three molecules of FEN1 bind to one PCNA trimer with each molecule binding to one PCNA monomer. PCNA stimulates the nuclease activity without altering cleavage specificity. Mg(2+) is required as a cofactor. Phosphorylated. Phosphorylation upon DNA damage induces relocalization to the nuclear plasma.

Its subcellular location is the nucleus. It localises to the nucleolus. The protein localises to the nucleoplasm. It is found in the mitochondrion. In terms of biological role, structure-specific nuclease with 5'-flap endonuclease and 5'-3' exonuclease activities involved in DNA replication and repair. During DNA replication, cleaves the 5'-overhanging flap structure that is generated by displacement synthesis when DNA polymerase encounters the 5'-end of a downstream Okazaki fragment. It enters the flap from the 5'-end and then tracks to cleave the flap base, leaving a nick for ligation. Also involved in the long patch base excision repair (LP-BER) pathway, by cleaving within the apurinic/apyrimidinic (AP) site-terminated flap. Acts as a genome stabilization factor that prevents flaps from equilibrating into structures that lead to duplications and deletions. Also possesses 5'-3' exonuclease activity on nicked or gapped double-stranded DNA, and exhibits RNase H activity. Also involved in replication and repair of rDNA and in repairing mitochondrial DNA. The chain is Flap endonuclease 1-A from Laccaria bicolor (strain S238N-H82 / ATCC MYA-4686) (Bicoloured deceiver).